Consider the following 237-residue polypeptide: Leucyl/phenylalanyl-tRNA--protein transferase (237 aa).

Belongs to the L/F-transferase family.

It localises to the cytoplasm. The enzyme catalyses N-terminal L-lysyl-[protein] + L-leucyl-tRNA(Leu) = N-terminal L-leucyl-L-lysyl-[protein] + tRNA(Leu) + H(+). It carries out the reaction N-terminal L-arginyl-[protein] + L-leucyl-tRNA(Leu) = N-terminal L-leucyl-L-arginyl-[protein] + tRNA(Leu) + H(+). The catalysed reaction is L-phenylalanyl-tRNA(Phe) + an N-terminal L-alpha-aminoacyl-[protein] = an N-terminal L-phenylalanyl-L-alpha-aminoacyl-[protein] + tRNA(Phe). Its function is as follows. Functions in the N-end rule pathway of protein degradation where it conjugates Leu, Phe and, less efficiently, Met from aminoacyl-tRNAs to the N-termini of proteins containing an N-terminal arginine or lysine. The chain is Leucyl/phenylalanyl-tRNA--protein transferase from Shewanella baltica (strain OS195).